The chain runs to 394 residues: Phosphopentomutase (394 aa).

Mn(2+) is bound by residues aspartate 13, aspartate 286, histidine 291, aspartate 327, histidine 328, and histidine 339.

It belongs to the phosphopentomutase family. Mn(2+) is required as a cofactor.

It is found in the cytoplasm. It carries out the reaction 2-deoxy-alpha-D-ribose 1-phosphate = 2-deoxy-D-ribose 5-phosphate. It catalyses the reaction alpha-D-ribose 1-phosphate = D-ribose 5-phosphate. It functions in the pathway carbohydrate degradation; 2-deoxy-D-ribose 1-phosphate degradation; D-glyceraldehyde 3-phosphate and acetaldehyde from 2-deoxy-alpha-D-ribose 1-phosphate: step 1/2. Its function is as follows. Isomerase that catalyzes the conversion of deoxy-ribose 1-phosphate (dRib-1-P) and ribose 1-phosphate (Rib-1-P) to deoxy-ribose 5-phosphate (dRib-5-P) and ribose 5-phosphate (Rib-5-P), respectively. This Bacillus anthracis (strain A0248) protein is Phosphopentomutase.